A 342-amino-acid chain; its full sequence is Anthranilate phosphoribosyltransferase (342 aa).

5-phospho-alpha-D-ribose 1-diphosphate-binding positions include G79, 82–83, T87, 89–92, 107–115, and S119; these read GD, NIST, and KHCNQRISS. Residue G79 coordinates anthranilate. S91 provides a ligand contact to Mg(2+). Residue N110 coordinates anthranilate. Residue R165 coordinates anthranilate. D223 and E224 together coordinate Mg(2+).

The protein belongs to the anthranilate phosphoribosyltransferase family. Homodimer. Requires Mg(2+) as cofactor.

The enzyme catalyses N-(5-phospho-beta-D-ribosyl)anthranilate + diphosphate = 5-phospho-alpha-D-ribose 1-diphosphate + anthranilate. It participates in amino-acid biosynthesis; L-tryptophan biosynthesis; L-tryptophan from chorismate: step 2/5. Catalyzes the transfer of the phosphoribosyl group of 5-phosphorylribose-1-pyrophosphate (PRPP) to anthranilate to yield N-(5'-phosphoribosyl)-anthranilate (PRA). This chain is Anthranilate phosphoribosyltransferase, found in Buchnera aphidicola subsp. Acyrthosiphon pisum (strain Tuc7).